We begin with the raw amino-acid sequence, 505 residues long: Lysine--tRNA ligase (505 aa).

The Mg(2+) site is built by Glu415 and Glu422.

This sequence belongs to the class-II aminoacyl-tRNA synthetase family. As to quaternary structure, homodimer. Mg(2+) is required as a cofactor.

It is found in the cytoplasm. It carries out the reaction tRNA(Lys) + L-lysine + ATP = L-lysyl-tRNA(Lys) + AMP + diphosphate. This is Lysine--tRNA ligase from Xanthomonas campestris pv. campestris (strain 8004).